The primary structure comprises 493 residues: Probable cytosol aminopeptidase (493 aa).

K265 and D270 together coordinate Mn(2+). K277 is an active-site residue. Mn(2+) contacts are provided by D288, D347, and E349. R351 is a catalytic residue.

This sequence belongs to the peptidase M17 family. It depends on Mn(2+) as a cofactor.

It is found in the cytoplasm. It catalyses the reaction Release of an N-terminal amino acid, Xaa-|-Yaa-, in which Xaa is preferably Leu, but may be other amino acids including Pro although not Arg or Lys, and Yaa may be Pro. Amino acid amides and methyl esters are also readily hydrolyzed, but rates on arylamides are exceedingly low.. The enzyme catalyses Release of an N-terminal amino acid, preferentially leucine, but not glutamic or aspartic acids.. Its function is as follows. Presumably involved in the processing and regular turnover of intracellular proteins. Catalyzes the removal of unsubstituted N-terminal amino acids from various peptides. The chain is Probable cytosol aminopeptidase from Hydrogenovibrio crunogenus (strain DSM 25203 / XCL-2) (Thiomicrospira crunogena).